The sequence spans 428 residues: Histidinol dehydrogenase homolog (428 aa).

2 residues coordinate Zn(2+): Gln-250 and His-253. Residues Glu-320 and His-321 each act as proton acceptor in the active site. Asp-354 and His-413 together coordinate Zn(2+).

This sequence belongs to the histidinol dehydrogenase family. Zn(2+) is required as a cofactor.

In Pelagibacter ubique (strain HTCC1062), this protein is Histidinol dehydrogenase homolog.